Here is a 395-residue protein sequence, read N- to C-terminus: Vacuolar protease A (395 aa).

The N-terminal stretch at 1–18 (MKGSLLLAGATLLGCTSA) is a signal peptide. Residues 19–72 (KLHSLKLKKVSLKEQLEHADIDVQIKSLGQKYMGIRPGQHEQQMFKEQTPIEAE) constitute a propeptide, activation peptide. One can recognise a Peptidase A1 domain in the interval 87–392 (YFSEISIGTP…DLGKGTVGLA (306 aa)). Residue Asp-105 is part of the active site. The cysteines at positions 118 and 123 are disulfide-linked. Asn-140 is a glycosylation site (N-linked (GlcNAc...) asparagine). Asp-289 is an active-site residue. Cys-318 and Cys-351 are oxidised to a cystine. N-linked (GlcNAc...) asparagine glycosylation is present at Asn-335.

Belongs to the peptidase A1 family.

The protein resides in the vacuole lumen. The protein localises to the secreted. The enzyme catalyses Hydrolysis of proteins with broad specificity for peptide bonds. Cleaves -Leu-Leu-|-Val-Tyr- bond in a synthetic substrate. Does not act on esters of Tyr or Arg.. Functionally, vacuolar aspartic endopeptidase which is probably also secreted and contributes to virulence. The protein is Vacuolar protease A (PEP2) of Arthroderma otae (strain ATCC MYA-4605 / CBS 113480) (Microsporum canis).